We begin with the raw amino-acid sequence, 474 residues long: MDFKVADLSLAEAGRHQIRLAEYEMPGLMQLRKEFADEQPLKGARIAGSIHMTVQTAVLIETLTALGAEVRWASCNIFSTQDEAAAAIVVGSGTVEEPAGVPVFAWKGESLEEYWWCINQIFSWGDELPNMILDDGGDATMAVIRGREYEQAGLVPPAEANDSDEYIAFLGMLREVLAAEPGKWGKIAEAVKGVTEETTTGVHRLYHFAEEGVLPFPAMNVNDAVTKSKFDNKYGTRHSLIDGINRATDMLMGGKNVLVCGYGDVGKGCAEAFDGQGARVKVTEADPINALQALMDGYSVVTVDEAIEDADIVITATGNKDIISFEQMLKMKDHALLGNIGHFDNEIDMHSLLHRDDVTRTTIKPQVDEFTFSTGRSIIVLSEGRLLNLGNATGHPSFVMSNSFADQTIAQIELFQNEGQYENEVYRLPKVLDEKVARIHVEALGGQLTELTKEQAEYIGVDVAGPFKPEHYRY.

Residues T53, D135, and E197 each coordinate substrate. 198–200 (TTT) contacts NAD(+). Substrate contacts are provided by K227 and D231. Residues N232, 261–266 (GYGDVG), E284, N319, 340–342 (IGH), and N388 contribute to the NAD(+) site.

It belongs to the adenosylhomocysteinase family. Requires NAD(+) as cofactor.

It is found in the cytoplasm. The enzyme catalyses S-adenosyl-L-homocysteine + H2O = L-homocysteine + adenosine. It participates in amino-acid biosynthesis; L-homocysteine biosynthesis; L-homocysteine from S-adenosyl-L-homocysteine: step 1/1. May play a key role in the regulation of the intracellular concentration of adenosylhomocysteine. This is Adenosylhomocysteinase from Corynebacterium glutamicum (strain ATCC 13032 / DSM 20300 / JCM 1318 / BCRC 11384 / CCUG 27702 / LMG 3730 / NBRC 12168 / NCIMB 10025 / NRRL B-2784 / 534).